Reading from the N-terminus, the 378-residue chain is uncharacterized protein (378 aa).

Residues 150–176 (TTTATTSNNRFNNNNSNNNNINNNNDN) are compositionally biased toward low complexity. Residues 150–187 (TTTATTSNNRFNNNNSNNNNINNNNDNNNKEQKKESRC) are disordered. The span at 177-187 (NNKEQKKESRC) shows a compositional bias: basic and acidic residues.

This is an uncharacterized protein from Dictyostelium discoideum (Social amoeba).